Here is a 228-residue protein sequence, read N- to C-terminus: UPF0173 metal-dependent hydrolase Tpen_1493 (228 aa).

It belongs to the UPF0173 family.

This Thermofilum pendens (strain DSM 2475 / Hrk 5) protein is UPF0173 metal-dependent hydrolase Tpen_1493.